The following is a 243-amino-acid chain: Tetraspanin-36 (243 aa).

The Cytoplasmic portion of the chain corresponds to 1 to 9 (MDCGIITSK). A helical transmembrane segment spans residues 10-30 (TILLLLSLIFWAAGAALAYVG). Topologically, residues 31–49 (SYVIKSYNNFEDFMSDRHT) are lumenal. A helical transmembrane segment spans residues 50–70 (LIPAAIIIGVAVVMFIIGFVG). Over 71 to 84 (CCATLRESKVGLGL) the chain is Cytoplasmic. Residues 85-105 (FLIIIMLIFAAEVTAFVFGII) form a helical membrane-spanning segment. At 106–208 (YRGRIRGDLE…QVLQDVLSYA (103 aa)) the chain is on the lumenal side. N-linked (GlcNAc...) asparagine glycosylation is found at asparagine 149, asparagine 163, and asparagine 174. Residues 209 to 229 (MLVILGFAIIKFFGMLSVCVI) traverse the membrane as a helical segment. Residues 230–243 (TCKSKKNEYQPLYA) are Cytoplasmic-facing.

It belongs to the tetraspanin (TM4SF) family. N-glycosylated. Strongly expressed in melanophores and xanthophores. Also detected in eye, brain, heart, skin, fin, testis and ovary.

It is found in the golgi apparatus membrane. Its subcellular location is the endoplasmic reticulum membrane. Functionally, plays a role in migration and segregation of pigment cells (melanophores and xanthophores). Contributes to pigment stripe patterning in the epidermis. In Danio rerio (Zebrafish), this protein is Tetraspanin-36.